A 463-amino-acid chain; its full sequence is Argininosuccinate lyase (463 aa).

It belongs to the lyase 1 family. Argininosuccinate lyase subfamily.

It localises to the cytoplasm. It catalyses the reaction 2-(N(omega)-L-arginino)succinate = fumarate + L-arginine. The protein operates within amino-acid biosynthesis; L-arginine biosynthesis; L-arginine from L-ornithine and carbamoyl phosphate: step 3/3. The sequence is that of Argininosuccinate lyase from Dinoroseobacter shibae (strain DSM 16493 / NCIMB 14021 / DFL 12).